Here is a 963-residue protein sequence, read N- to C-terminus: Protein suppressor of white apricot (963 aa).

One copy of the SURP motif 1 repeat lies at 234 to 276 (IIEKTARFIATQGAQMEILIKAKQANNTQFDFLTQGGHLQPYY). Disordered regions lie at residues 290–322 (PAPQ…RRNP) and 360–430 (EDES…EPPQ). Positions 300–317 (NTDKEAPSADDHSEEVAG) are enriched in basic and acidic residues. The segment covering 364 to 375 (SNPGNSQHSGGT) has biased composition (polar residues). Residues 407–418 (THEEESSNREQQ) are compositionally biased toward basic and acidic residues. Residues S438, S447, S448, and S450 each carry the phosphoserine modification. Positions 445 to 470 (NYSSESEEEEDQVQPEKEEEKKPEPV) are disordered. Over residues 458–468 (QPEKEEEKKPE) the composition is skewed to basic and acidic residues. An SURP motif 2 repeat occupies 483–523 (IIDKTATYVIKNGRQFEETLRTKSVDRFSFLLPANEYYPYY). Disordered stretches follow at residues 593 to 613 (PQEA…HVRP), 634 to 662 (TAGQ…ERVK), and 716 to 963 (PPES…SSSP). Positions 637 to 651 (QKGNITASPSCSSPQ) are enriched in polar residues. Residue S649 is modified to Phosphoserine. Positions 652–662 (KEQRQAEERVK) are enriched in basic and acidic residues. A compositionally biased stretch (low complexity) spans 718-727 (ESAAGAATAD). The segment covering 768–778 (DEEDDDEEDGG) has biased composition (acidic residues). The segment covering 787-796 (NDDSTNTFTS) has biased composition (polar residues). A compositionally biased stretch (pro residues) spans 799 to 809 (VLPPTAAPPPA). The segment covering 820-830 (QLVATTSTRSS) has biased composition (low complexity). Residues 831–847 (SSRHLKTHRRSRSRSKN) show a composition bias toward basic residues. A compositionally biased stretch (low complexity) spans 848 to 858 (VRSSDSSPSSR). Composition is skewed to basic residues over residues 861–870 (SRRRRQKSSR) and 882–913 (KSQH…RRSR). Phosphoserine occurs at positions 912, 914, and 916. Residues 934–944 (AEQRRQQDRRR) are compositionally biased toward basic and acidic residues. Positions 945–963 (TPTKKSHKRHKRRRRSSSP) are enriched in basic residues.

It localises to the nucleus speckle. Regulator of pre-mRNA splicing (and, possibly, of other RNA processing events). Regulates its own expression at the level of RNA processing. In Drosophila melanogaster (Fruit fly), this protein is Protein suppressor of white apricot (su(w[a])).